A 376-amino-acid polypeptide reads, in one-letter code: Alcohol dehydrogenase 1 (376 aa).

Residue Ser2 is modified to N-acetylserine. Positions 47, 68, 98, 101, 104, 112, and 176 each coordinate Zn(2+). Residues 201–206 (GLGGVG), Asp225, Lys230, 294–296 (VGV), and Arg371 contribute to the NAD(+) site.

The protein belongs to the zinc-containing alcohol dehydrogenase family. Class-I subfamily. In terms of assembly, homodimer. Requires Zn(2+) as cofactor.

The protein localises to the cytoplasm. It catalyses the reaction a primary alcohol + NAD(+) = an aldehyde + NADH + H(+). It carries out the reaction a secondary alcohol + NAD(+) = a ketone + NADH + H(+). The protein is Alcohol dehydrogenase 1 (ADH1) of Gallus gallus (Chicken).